Reading from the N-terminus, the 148-residue chain is Large ribosomal subunit protein bL9 (148 aa).

It belongs to the bacterial ribosomal protein bL9 family.

Functionally, binds to the 23S rRNA. The sequence is that of Large ribosomal subunit protein bL9 from Macrococcus caseolyticus (strain JCSC5402) (Macrococcoides caseolyticum).